A 325-amino-acid chain; its full sequence is Diacylglycerol acyltransferase/mycolyltransferase Ag85B (325 aa).

An N-terminal signal peptide occupies residues Met1 to Ala40. Leu82–Arg83 is a substrate binding site. A fibronectin-binding region spans residues Phe98–Val108. Cys127 and Cys132 are disulfide-bonded. Substrate is bound by residues Ser166 and Asp194. Ser166 functions as the Nucleophile in the catalytic mechanism. Residue Glu270 is part of the active site. Substrate is bound by residues Phe272–Ser275, Lys279, and His302–Trp304. His302 is a catalytic residue.

It belongs to the mycobacterial A85 antigen family.

It localises to the secreted. It carries out the reaction 2 alpha,alpha'-trehalose 6-mycolate = alpha,alpha'-trehalose 6,6'-bismycolate + alpha,alpha-trehalose. The enzyme catalyses an acyl-CoA + a 1,2-diacyl-sn-glycerol = a triacyl-sn-glycerol + CoA. In terms of biological role, the antigen 85 proteins (FbpA, FbpB, FbpC) are responsible for the high affinity of mycobacteria for fibronectin, a large adhesive glycoprotein, which facilitates the attachment of M.tuberculosis to murine alveolar macrophages (AMs). They also help to maintain the integrity of the cell wall by catalyzing the transfer of mycolic acids to cell wall arabinogalactan and through the synthesis of alpha,alpha-trehalose dimycolate (TDM, cord factor). They catalyze the transfer of a mycoloyl residue from one molecule of alpha,alpha-trehalose monomycolate (TMM) to another TMM, leading to the formation of TDM. This chain is Diacylglycerol acyltransferase/mycolyltransferase Ag85B (fbpB), found in Mycobacterium kansasii.